Reading from the N-terminus, the 159-residue chain is SsrA-binding protein (159 aa).

This sequence belongs to the SmpB family.

The protein resides in the cytoplasm. Its function is as follows. Required for rescue of stalled ribosomes mediated by trans-translation. Binds to transfer-messenger RNA (tmRNA), required for stable association of tmRNA with ribosomes. tmRNA and SmpB together mimic tRNA shape, replacing the anticodon stem-loop with SmpB. tmRNA is encoded by the ssrA gene; the 2 termini fold to resemble tRNA(Ala) and it encodes a 'tag peptide', a short internal open reading frame. During trans-translation Ala-aminoacylated tmRNA acts like a tRNA, entering the A-site of stalled ribosomes, displacing the stalled mRNA. The ribosome then switches to translate the ORF on the tmRNA; the nascent peptide is terminated with the 'tag peptide' encoded by the tmRNA and targeted for degradation. The ribosome is freed to recommence translation, which seems to be the essential function of trans-translation. The sequence is that of SsrA-binding protein from Mycobacteroides abscessus (strain ATCC 19977 / DSM 44196 / CCUG 20993 / CIP 104536 / JCM 13569 / NCTC 13031 / TMC 1543 / L948) (Mycobacterium abscessus).